Consider the following 393-residue polypeptide: Dual specificity mitogen-activated protein kinase kinase 1 (393 aa).

The tract at residues 1 to 27 (MPKKKPTPIQLNPAPDGSAVNGTSSAE) is disordered. In terms of domain architecture, Protein kinase spans 68–361 (FEKISELGAG…LKQLMVHAFI (294 aa)). ATP is bound by residues 74–82 (LGAGNGGVV) and Lys97. Asp190 (proton acceptor) is an active-site residue. Residues Ser218 and Ser222 each carry the phosphoserine; by RAF modification. Positions 270 to 307 (ELELMFGCQVEGDAAETPPRPRTPGRPLSSYGMDSRPP) are RAF1-binding. At Thr286 the chain carries Phosphothreonine. Phosphothreonine; by MAPK1 is present on Thr292. The residue at position 298 (Ser298) is a Phosphoserine; by PAK.

It belongs to the protein kinase superfamily. STE Ser/Thr protein kinase family. MAP kinase kinase subfamily. In terms of assembly, found in a complex with at least BRAF, HRAS, MAP2K1, MAPK3/ERK1 and RGS14. Forms a heterodimer with MAP2K2/MEK2. Forms heterodimers with KSR2 which further dimerize to form tetramers. Interacts with KSR1 or KSR2 and BRAF; the interaction with KSR1 or KSR2 mediates KSR1-BRAF or KSR2-BRAF dimerization. Interacts with ARBB2, LAMTOR3, MAPK1/ERK2 and RAF1. Interacts with MAPK1/ERK2. Interacts with MORG1. Interacts with PPARG. Interacts with isoform 1 of VRK2. Interacts with SGK1. Interacts with BIRC6/bruce. Interacts with KAT7; the interaction promotes KAT7 phosphorylation. Interacts with RAF1 and NEK10; the interaction is required for ERK1/2-signaling pathway activation in response to UV irradiation. Interacts with TRAF3IP3. Interacts with MOS. In terms of processing, phosphorylation at Ser-218 and Ser-222 by MAP kinase kinase kinases (BRAF or MEKK1) positively regulates the kinase activity. Also phosphorylated at Thr-292 by MAPK1/ERK2 and at Ser-298 by PAK. MAPK1/ERK2 phosphorylation of Thr-292 occurs in response to cellular adhesion and leads to inhibition of Ser-298 phosphorylation by PAK. Autophosphorylated at Ser-218 and Ser-222, autophosphosphorylation is promoted by NEK10 following UV irradiation.

The protein localises to the cytoplasm. The protein resides in the cytoskeleton. It localises to the microtubule organizing center. Its subcellular location is the centrosome. It is found in the spindle pole body. The protein localises to the nucleus. The protein resides in the membrane. The catalysed reaction is L-seryl-[protein] + ATP = O-phospho-L-seryl-[protein] + ADP + H(+). The enzyme catalyses L-threonyl-[protein] + ATP = O-phospho-L-threonyl-[protein] + ADP + H(+). It catalyses the reaction L-tyrosyl-[protein] + ATP = O-phospho-L-tyrosyl-[protein] + ADP + H(+). With respect to regulation, ras proteins such as HRAS mediate the activation of RAF proteins such as RAF1 or BRAF which in turn activate extracellular signal-regulated kinases (ERK) through MAPK (mitogen-activated protein kinases) and ERK kinases MAP2K1/MEK1 and MAP2K2/MEK2. Activation occurs through phosphorylation of Ser-218 and Ser-222. MAP2K1/MEK1 binds KSR1 or KSR2 releasing the inhibitory intramolecular interaction between KSR1 or KSR2 protein kinase and N-terminal domains. This allows KSR1 or KSR2 dimerization with BRAF leading to BRAF activation and phosphorylation of MAP2K1. MAP2K1/MEK1 is also the target of negative feed-back regulation by its substrate kinases, such as MAPK1/ERK2. These phosphorylate MAP2K1/MEK1 on Thr-292, thereby facilitating dephosphorylation of the activating residues Ser-218 and Ser-222. Inhibited by serine/threonine phosphatase 2A. Functionally, dual specificity protein kinase which acts as an essential component of the MAP kinase signal transduction pathway. Binding of extracellular ligands such as growth factors, cytokines and hormones to their cell-surface receptors activates RAS and this initiates RAF1 activation. RAF1 then further activates the dual-specificity protein kinases MAP2K1/MEK1 and MAP2K2/MEK2. Both MAP2K1/MEK1 and MAP2K2/MEK2 function specifically in the MAPK/ERK cascade, and catalyze the concomitant phosphorylation of a threonine and a tyrosine residue in a Thr-Glu-Tyr sequence located in the extracellular signal-regulated kinases MAPK3/ERK1 and MAPK1/ERK2, leading to their activation and further transduction of the signal within the MAPK/ERK cascade. Activates BRAF in a KSR1 or KSR2-dependent manner; by binding to KSR1 or KSR2 releases the inhibitory intramolecular interaction between KSR1 or KSR2 protein kinase and N-terminal domains which promotes KSR1 or KSR2-BRAF dimerization and BRAF activation. Depending on the cellular context, this pathway mediates diverse biological functions such as cell growth, adhesion, survival and differentiation, predominantly through the regulation of transcription, metabolism and cytoskeletal rearrangements. One target of the MAPK/ERK cascade is peroxisome proliferator-activated receptor gamma (PPARG), a nuclear receptor that promotes differentiation and apoptosis. MAP2K1/MEK1 has been shown to export PPARG from the nucleus. The MAPK/ERK cascade is also involved in the regulation of endosomal dynamics, including lysosome processing and endosome cycling through the perinuclear recycling compartment (PNRC), as well as in the fragmentation of the Golgi apparatus during mitosis. The protein is Dual specificity mitogen-activated protein kinase kinase 1 (MAP2K1) of Pan troglodytes (Chimpanzee).